The chain runs to 158 residues: Ribosome maturation factor RimP (158 aa).

Belongs to the RimP family.

The protein localises to the cytoplasm. In terms of biological role, required for maturation of 30S ribosomal subunits. The chain is Ribosome maturation factor RimP from Lactobacillus acidophilus (strain ATCC 700396 / NCK56 / N2 / NCFM).